The following is a 916-amino-acid chain: RNA-directed DNA polymerase from mobile element jockey (916 aa).

Residues 483 to 757 (SVLDVGYFPK…QAYKYLGITL (275 aa)) form the Reverse transcriptase domain.

Mg(2+) is required as a cofactor. The cofactor is Mn(2+).

It carries out the reaction DNA(n) + a 2'-deoxyribonucleoside 5'-triphosphate = DNA(n+1) + diphosphate. Inactivated by sulphydryl reagent. This is RNA-directed DNA polymerase from mobile element jockey (pol) from Drosophila melanogaster (Fruit fly).